A 102-amino-acid chain; its full sequence is MVRYRVRSPSEPSHEVYRQQLHGQEQGHHGQEEQGLSPEHVEVYERTHGHSHYRRRHCSRRRLRRIHRQQHRSCRRRKRRSCRHRRRHRRGCRTRRRTCRKH.

The segment at 1–102 is disordered; that stretch reads MVRYRVRSPS…RTRRRTCRKH (102 aa). Phosphoserine is present on residues S8, S10, and S37. The segment covering 39–48 has biased composition (basic and acidic residues); the sequence is EHVEVYERTH. The span at 49 to 102 shows a compositional bias: basic residues; sequence GHSHYRRRHCSRRRLRRIHRQQHRSCRRRKRRSCRHRRRHRRGCRTRRRTCRKH.

It belongs to the protamine P2 family. Interacts with TDRP. Post-translationally, proteolytic processing into mature chains is required for histone eviction during spermatogenesis. Transition proteins (TNP1 and TNP2) are required for processing. As to expression, testis.

It localises to the nucleus. The protein localises to the chromosome. Functionally, protamines substitute for histones in the chromatin of sperm during the haploid phase of spermatogenesis. They compact sperm DNA into a highly condensed, stable and inactive complex. The chain is Protamine-2 (PRM2) from Pan paniscus (Pygmy chimpanzee).